The chain runs to 102 residues: NAD(P)H-quinone oxidoreductase subunit 4L (102 aa).

3 consecutive transmembrane segments (helical) span residues Leu4–Val24, Met33–Val53, and Val65–Ile85.

Belongs to the complex I subunit 4L family. In terms of assembly, NDH-1 can be composed of about 15 different subunits; different subcomplexes with different compositions have been identified which probably have different functions.

The protein localises to the cellular thylakoid membrane. It catalyses the reaction a plastoquinone + NADH + (n+1) H(+)(in) = a plastoquinol + NAD(+) + n H(+)(out). It carries out the reaction a plastoquinone + NADPH + (n+1) H(+)(in) = a plastoquinol + NADP(+) + n H(+)(out). NDH-1 shuttles electrons from an unknown electron donor, via FMN and iron-sulfur (Fe-S) centers, to quinones in the respiratory and/or the photosynthetic chain. The immediate electron acceptor for the enzyme in this species is believed to be plastoquinone. Couples the redox reaction to proton translocation, and thus conserves the redox energy in a proton gradient. Cyanobacterial NDH-1 also plays a role in inorganic carbon-concentration. The protein is NAD(P)H-quinone oxidoreductase subunit 4L of Synechococcus sp. (strain JA-3-3Ab) (Cyanobacteria bacterium Yellowstone A-Prime).